Reading from the N-terminus, the 229-residue chain is 2,3-bisphosphoglycerate-dependent phosphoglycerate mutase 2 (229 aa).

Substrate-binding positions include 8–15 (RHGQSEWN), 21–22 (TG), R60, 87–90 (ERHY), K98, 114–115 (RR), and 183–184 (GN). The active-site Tele-phosphohistidine intermediate is the H9. Residue E87 is the Proton donor/acceptor of the active site.

This sequence belongs to the phosphoglycerate mutase family. BPG-dependent PGAM subfamily.

The enzyme catalyses (2R)-2-phosphoglycerate = (2R)-3-phosphoglycerate. Its pathway is carbohydrate degradation; glycolysis; pyruvate from D-glyceraldehyde 3-phosphate: step 3/5. In terms of biological role, catalyzes the interconversion of 2-phosphoglycerate and 3-phosphoglycerate. The chain is 2,3-bisphosphoglycerate-dependent phosphoglycerate mutase 2 from Latilactobacillus sakei subsp. sakei (strain 23K) (Lactobacillus sakei subsp. sakei).